We begin with the raw amino-acid sequence, 977 residues long: Probable UDP-N-acetylglucosamine--peptide N-acetylglucosaminyltransferase SEC (977 aa).

14 TPR repeats span residues 2-35 (ISSK…SVSS), 53-86 (DDAR…NPLR), 87-120 (TDNL…QPQF), 121-154 (AECY…RPNF), 155-188 (ADAW…NPLL), 189-222 (VDAH…QPTF), 223-256 (AIAW…KPAF), 257-290 (PDAY…RPNS), 291-324 (AMAF…DPRF), 325-358 (LEAY…QPNH), 359-392 (PQAM…TTGL), 393-426 (SAPF…DPLA), 427-460 (ADAL…RPTM), and 461-494 (AEAH…RPDF). The interval 495-977 (PEATCNLLHT…ENDLEFPHDR (483 aa)) is catalytic region.

This sequence belongs to the glycosyltransferase 41 family. O-GlcNAc transferase subfamily. Interacts with TCP14 and TCP15. Interacts with ATX1.

The catalysed reaction is L-seryl-[protein] + UDP-N-acetyl-alpha-D-glucosamine = 3-O-(N-acetyl-beta-D-glucosaminyl)-L-seryl-[protein] + UDP + H(+). The enzyme catalyses L-threonyl-[protein] + UDP-N-acetyl-alpha-D-glucosamine = 3-O-(N-acetyl-beta-D-glucosaminyl)-L-threonyl-[protein] + UDP + H(+). It functions in the pathway protein modification; protein glycosylation. Its function is as follows. O-linked N-acetylglucosamine transferase (OGT) that mediates O-glycosylation of capsid protein (CP) of virus in case of infection by Plum pox virus. OGTs catalyze the addition of nucleotide-activated sugars directly onto the polypeptide through O-glycosidic linkage with the hydroxyl of serine or threonine. Probably acts by adding O-linked sugars to yet unknown proteins. Its OGT activity has been proved in vitro but not in vivo. Required with SPY for gamete and seed development. Mediates O-glycosylation of the DELLA protein RGA, a repressor of the gibberellin (GA) signaling pathway. O-glycosylation by SEC inhibits RGA binding to four of its interactors PIF3, PIF4, JAZ1, and BZR1 that are key regulators in light, jasmonate, and brassinosteroid signaling pathways, respectively. Activates ATX1 through O-GlcNAc modification to augment ATX1-mediated H3K4me3 histone epigenetic modification at FLC locus, thus preventing premature flowering. The protein is Probable UDP-N-acetylglucosamine--peptide N-acetylglucosaminyltransferase SEC of Arabidopsis thaliana (Mouse-ear cress).